The primary structure comprises 173 residues: Signal peptidase complex catalytic subunit SEC11 (173 aa).

The Cytoplasmic portion of the chain corresponds to 1–15; that stretch reads MLGVSGMQPRQLAAQ. The chain crosses the membrane as a helical; Signal-anchor for type II membrane protein span at residues 16–36; that stretch reads ILNFALVLSTAFMMWKGLSVV. The Lumenal portion of the chain corresponds to 37-173; the sequence is SDSSSPIVVV…MGVMVVLQRE (137 aa). Residues S50, H89, and D115 each act as charge relay system in the active site. Residues 159-170 are C-terminal short (CTS) helix; sequence VMLGLMGVMVVL.

Belongs to the peptidase S26B family. Component of the signal peptidase complex (SPC) composed of a catalytic subunit SEC11 and three accessory subunits SPC1, SPC2 and SPC3. The complex induces a local thinning of the ER membrane which is used to measure the length of the signal peptide (SP) h-region of protein substrates. This ensures the selectivity of the complex towards h-regions shorter than 18-20 amino acids. SPC associates with the translocon complex.

The protein resides in the endoplasmic reticulum membrane. It catalyses the reaction Cleavage of hydrophobic, N-terminal signal or leader sequences from secreted and periplasmic proteins.. Its function is as follows. Catalytic component of the signal peptidase complex (SPC) which catalyzes the cleavage of N-terminal signal sequences from nascent proteins as they are translocated into the lumen of the endoplasmic reticulum. Specifically cleaves N-terminal signal peptides that contain a hydrophobic alpha-helix (h-region) shorter than 18-20 amino acids. The protein is Signal peptidase complex catalytic subunit SEC11 (SEC11) of Leptosphaeria maculans (strain JN3 / isolate v23.1.3 / race Av1-4-5-6-7-8) (Blackleg fungus).